A 155-amino-acid chain; its full sequence is Small ribosomal subunit protein uS7 (155 aa).

Belongs to the universal ribosomal protein uS7 family. Part of the 30S ribosomal subunit. Contacts proteins S9 and S11.

Functionally, one of the primary rRNA binding proteins, it binds directly to 16S rRNA where it nucleates assembly of the head domain of the 30S subunit. Is located at the subunit interface close to the decoding center, probably blocks exit of the E-site tRNA. The protein is Small ribosomal subunit protein uS7 of Helicobacter pylori (strain Shi470).